The sequence spans 597 residues: Fructan 1-exohydrolase (597 aa).

The signal sequence occupies residues 1-15 (MAQAWAFLLPVLVFG). Asp-76 is a catalytic residue. 3 N-linked (GlcNAc...) asparagine glycosylation sites follow: Asn-169, Asn-237, and Asn-249. Cys-447 and Cys-493 form a disulfide bridge. N-linked (GlcNAc...) asparagine glycosylation occurs at Asn-568.

Belongs to the glycosyl hydrolase 32 family.

It catalyses the reaction Hydrolysis of terminal, non-reducing (2-&gt;1)-linked beta-D-fructofuranose residues in fructans.. Inhibited by sucrose. Hydrolyzes inulin-type beta-(2,1)-fructans. May play a role as a beta-(2,1)-trimmer during graminan biosynthesis. In Triticum urartu (Red wild einkorn), this protein is Fructan 1-exohydrolase.